A 343-amino-acid polypeptide reads, in one-letter code: HTH-type transcriptional regulator GntR (343 aa).

Residues 16–70 (PTLNEVARRAGVSPITASRALRGVASVAEELAQKVRDAARELGYVANPAARALAS) form the HTH lacI-type domain. The segment at residues 18 to 37 (LNEVARRAGVSPITASRALR) is a DNA-binding region (H-T-H motif).

Its activity is regulated as follows. Free GntR fails to recognize gluconate and 6-phosphogluconate, whereas the GntR/DNA complexes recognize both ligands. It is therefore likely that GntR DNA binding induces structural changes that permit GntR to recognize effectors. In terms of biological role, involved in the regulation of glucose metabolism. Represses its own expression as well as that of the gluconate permease GntP. It employs an effector mediated de-repression mechanism: in the absence of ligand, GntR binds to the gntR and gntP promoters and represses their expression. The release of promoter bound GntR is induced by gluconate and 6-phosphogluconate that bind with similar apparent affinities to the GntR/DNA complex. The release of GntR leads to transcription of the genes. This chain is HTH-type transcriptional regulator GntR, found in Pseudomonas aeruginosa (strain ATCC 15692 / DSM 22644 / CIP 104116 / JCM 14847 / LMG 12228 / 1C / PRS 101 / PAO1).